The sequence spans 417 residues: Methylthioribose-1-phosphate isomerase (417 aa).

The active-site Proton donor is the aspartate 285.

It belongs to the eIF-2B alpha/beta/delta subunits family. MtnA subfamily.

The protein resides in the cytoplasm. It is found in the nucleus. It catalyses the reaction 5-(methylsulfanyl)-alpha-D-ribose 1-phosphate = 5-(methylsulfanyl)-D-ribulose 1-phosphate. It functions in the pathway amino-acid biosynthesis; L-methionine biosynthesis via salvage pathway; L-methionine from S-methyl-5-thio-alpha-D-ribose 1-phosphate: step 1/6. Its function is as follows. Catalyzes the interconversion of methylthioribose-1-phosphate (MTR-1-P) into methylthioribulose-1-phosphate (MTRu-1-P). The polypeptide is Methylthioribose-1-phosphate isomerase (Lachancea thermotolerans (strain ATCC 56472 / CBS 6340 / NRRL Y-8284) (Yeast)).